The following is a 339-amino-acid chain: Dihydroorotate dehydrogenase (quinone) (339 aa).

Residues 61 to 65 (AGLDK) and Thr-85 contribute to the FMN site. Lys-65 provides a ligand contact to substrate. Residue 110 to 114 (NRMGF) coordinates substrate. FMN-binding residues include Asn-138 and Asn-171. Asn-171 contacts substrate. Ser-174 functions as the Nucleophile in the catalytic mechanism. Residue Asn-176 participates in substrate binding. FMN is bound by residues Lys-216 and Thr-244. 245-246 (NT) provides a ligand contact to substrate. FMN contacts are provided by residues Gly-267, Gly-296, and 317 to 318 (YS).

It belongs to the dihydroorotate dehydrogenase family. Type 2 subfamily. Monomer. FMN is required as a cofactor.

Its subcellular location is the cell membrane. The enzyme catalyses (S)-dihydroorotate + a quinone = orotate + a quinol. It participates in pyrimidine metabolism; UMP biosynthesis via de novo pathway; orotate from (S)-dihydroorotate (quinone route): step 1/1. Its function is as follows. Catalyzes the conversion of dihydroorotate to orotate with quinone as electron acceptor. This is Dihydroorotate dehydrogenase (quinone) from Teredinibacter turnerae (strain ATCC 39867 / T7901).